An 802-amino-acid polypeptide reads, in one-letter code: DSC E3 ubiquitin ligase complex subunit A (802 aa).

A signal peptide spans 1-22 (MDNRGSFFFLLIVFYLLLSSQS). The Lumenal portion of the chain corresponds to 23 to 381 (RPPLLDQDRE…TGPKIEEYDK (359 aa)). N-linked (GlcNAc...) asparagine glycosylation is found at Asn48, Asn71, Asn115, Asn126, Asn148, and Asn166. A helical transmembrane segment spans residues 382–402 (YSARLVFIICGVFAAQITLLL). The Cytoplasmic segment spans residues 403 to 429 (RQIKEASTPSTRSRISFYTIALMAFGD). Residues 430–450 (AFVLIFILLELYPAVSFLVMA) form a helical membrane-spanning segment. Topologically, residues 451 to 453 (TAA) are lumenal. A helical membrane pass occupies residues 454–474 (FLTFLSVSYIGMKFMMEIWAV). The Cytoplasmic portion of the chain corresponds to 475–550 (QAPERREQER…QETRNDVGAM (76 aa)). A disordered region spans residues 478–541 (ERREQERRSN…TNRGTTSAAQ (64 aa)). A compositionally biased stretch (polar residues) spans 532–541 (TNRGTTSAAQ). A helical transmembrane segment spans residues 551-571 (YARFYFVLFVMLIISIWSFLW). Residues 572–574 (PNR) lie on the Lumenal side of the membrane. The helical transmembrane segment at 575–595 (LGALYARALAFVYLSFWTPQI) threads the bilayer. Residues 596–608 (GRNIIRNCRKALR) are Cytoplasmic-facing. A helical membrane pass occupies residues 609–629 (WDFVIGQSILRLFPFVYFLTV). Over 630–642 (RGNVLFIHPDTTT) the chain is Lumenal. The chain crosses the membrane as a helical span at residues 643–663 (AFALAGWVWIQVWVLASQDIL). At 664 to 802 (GPRFFVPRGW…PICRESIPPV (139 aa)) the chain is on the cytoplasmic side. The RING-type; atypical zinc finger occupies 732 to 796 (CAICMQEIEV…RLRLQCPICR (65 aa)).

In terms of assembly, component of the DSC E3 ubiquitin ligase complex composed of dscA, dscB, dscC and dscD.

The protein resides in the endoplasmic reticulum membrane. It catalyses the reaction S-ubiquitinyl-[E2 ubiquitin-conjugating enzyme]-L-cysteine + [acceptor protein]-L-lysine = [E2 ubiquitin-conjugating enzyme]-L-cysteine + N(6)-ubiquitinyl-[acceptor protein]-L-lysine.. The protein operates within protein modification; protein ubiquitination. In terms of biological role, catalytic component of the DSC E3 ubiquitin ligase complex which is required for the srbA transcriptional activator proteolytic cleavage to release the soluble transcription factor from the membrane in low oxygen or sterol conditions. Required for growth during hypoxia and triazole drug susceptibility, as well as for virulence in a murine model of invasive pulmonary aspergillosis (IPA). This Aspergillus fumigatus (strain CBS 144.89 / FGSC A1163 / CEA10) (Neosartorya fumigata) protein is DSC E3 ubiquitin ligase complex subunit A.